The primary structure comprises 252 residues: Receptor expression-enhancing protein 2 (252 aa).

The next 2 membrane-spanning stretches (helical) occupy residues methionine 1–tyrosine 21 and tyrosine 35–threonine 55. Serine 150 carries the post-translational modification Phosphoserine. The interval leucine 165 to alanine 252 is disordered. The span at serine 203 to proline 217 shows a compositional bias: basic and acidic residues.

This sequence belongs to the DP1 family. In terms of assembly, interacts with odorant receptor proteins. As to expression, detected in brain, heart and skeletal muscle, and at low levels in placenta, kidney and pancreas. Expressed in circumvallate papillae.

It localises to the membrane. Functionally, required for endoplasmic reticulum (ER) network formation, shaping and remodeling. May enhance the cell surface expression of odorant receptors. In Homo sapiens (Human), this protein is Receptor expression-enhancing protein 2 (REEP2).